The following is a 1723-amino-acid chain: Lymphocyte antigen 75 (1723 aa).

An N-terminal signal peptide occupies residues 1-27; it reads MRTGRVTPGLAAGLLLLLLRSFGLVEP. Topologically, residues 28-1667 are extracellular; it reads SESSGNDPFT…AVCKIPLSPD (1640 aa). The Ricin B-type lectin domain occupies 33-182; it reads NDPFTIVHEN…FLIGETWYHD (150 aa). Asn135 carries an N-linked (GlcNAc...) asparagine glycan. Residues 164–211 form the Fibronectin type-II domain; it reads SYGRPCEFPFLIGETWYHDCIHDEDHSGPWCATTLSYEYDQKWGICLL. Disulfide bonds link Cys169–Cys194, Cys183–Cys209, Cys247–Cys340, and Cys317–Cys332. Residues 225–341 enclose the C-type lectin 1 domain; that stretch reads QIGSCYQFNN…CESQQPYVCK (117 aa). 2 N-linked (GlcNAc...) asparagine glycosylation sites follow: Asn345 and Asn377. C-type lectin domains are found at residues 368-486, 493-625, and 652-791; these read NNGF…YVCK, KDAE…ICKK, and SSLS…WVCQ. 2 cysteine pairs are disulfide-bonded: Cys389–Cys485 and Cys462–Cys477. Asn529 carries N-linked (GlcNAc...) asparagine glycosylation. 3 cysteine pairs are disulfide-bonded: Cys597–Cys614, Cys678–Cys790, and Cys752–Cys782. 2 N-linked (GlcNAc...) asparagine glycosylation sites follow: Asn843 and Asn865. Tyr934 bears the Phosphotyrosine mark. Residues Asn935, Asn1077, and Asn1104 are each glycosylated (N-linked (GlcNAc...) asparagine). In terms of domain architecture, C-type lectin 5 spans 959-1092; sequence FQNKCFLKVN…ERHSLSLCQK (134 aa). Cys1061 and Cys1081 are oxidised to a cystine. In terms of domain architecture, C-type lectin 6 spans 1111–1223; that stretch reads YLNNLYKIIS…DNQPGAICYY (113 aa). Cys1198 and Cys1212 are oxidised to a cystine. N-linked (GlcNAc...) asparagine glycosylation is found at Asn1226, Asn1321, and Asn1393. Residues 1252 to 1375 form the C-type lectin 7 domain; it reads FQNSCYNFMI…VIEETLHFYQ (124 aa). 2 consecutive C-type lectin domains span residues 1402 to 1514 and 1543 to 1662; these read YKDG…ICYK and YGGH…VCKI. The cysteines at positions 1489 and 1503 are disulfide-linked. N-linked (GlcNAc...) asparagine glycans are attached at residues Asn1594 and Asn1627. Cys1636 and Cys1651 form a disulfide bridge. The helical transmembrane segment at 1668–1692 threads the bilayer; sequence YTGIAILFAVLCLLGLISLAIWFLL. Residues 1693 to 1723 lie on the Cytoplasmic side of the membrane; that stretch reads QRSHIRWTGFSSVRYEHGTNEDEVMLPSFHD. A phosphoserine mark is found at Ser1704 and Ser1720.

Post-translationally, N-glycosylated. Expressed in dendritic and thymic epithelial cells and lymph nodes.

Its subcellular location is the membrane. Its function is as follows. Acts as an endocytic receptor to direct captured antigens from the extracellular space to a specialized antigen-processing compartment. Causes reduced proliferation of B lymphocytes. The chain is Lymphocyte antigen 75 (Ly75) from Mus musculus (Mouse).